Here is a 143-residue protein sequence, read N- to C-terminus: Transcription antitermination protein NusB (143 aa).

This sequence belongs to the NusB family.

Functionally, involved in transcription antitermination. Required for transcription of ribosomal RNA (rRNA) genes. Binds specifically to the boxA antiterminator sequence of the ribosomal RNA (rrn) operons. This chain is Transcription antitermination protein NusB, found in Anaeromyxobacter sp. (strain Fw109-5).